The primary structure comprises 221 residues: Putative N-acetylmannosamine-6-phosphate 2-epimerase (221 aa).

It belongs to the NanE family.

The catalysed reaction is an N-acyl-D-glucosamine 6-phosphate = an N-acyl-D-mannosamine 6-phosphate. It functions in the pathway amino-sugar metabolism; N-acetylneuraminate degradation; D-fructose 6-phosphate from N-acetylneuraminate: step 3/5. Its function is as follows. Converts N-acetylmannosamine-6-phosphate (ManNAc-6-P) to N-acetylglucosamine-6-phosphate (GlcNAc-6-P). This chain is Putative N-acetylmannosamine-6-phosphate 2-epimerase, found in Clostridium perfringens (strain SM101 / Type A).